Here is a 535-residue protein sequence, read N- to C-terminus: Mannan polymerase I complex VAN1 subunit (535 aa).

The Cytoplasmic portion of the chain corresponds to 1–64 (MGMFFNLRSN…STPSKFQLTV (64 aa)). The tract at residues 22-48 (LPISRNGSSNNIKDKRSEHNSNSLKGK) is disordered. At serine 25 the chain carries Phosphoserine. A helical; Signal-anchor for type II membrane protein membrane pass occupies residues 65–81 (SITSLIIIAVLSLYLFI). The Lumenal segment spans residues 82 to 535 (SFLSGMGIGV…REREKRRQSE (454 aa)). Asparagine 215 and asparagine 251 each carry an N-linked (GlcNAc...) asparagine glycan.

The protein belongs to the ANP1/MMN9/VAN1 family. In terms of assembly, component of the M-Pol I complex which contains MNN9 and VAN1. Glycosylated.

The protein resides in the endoplasmic reticulum membrane. It localises to the golgi apparatus membrane. Functionally, involved in regulation of the phosphorylation of a number of proteins, some of which appear to be important in cell growth control. The M-Pol I complex possesses alpha-1,6-mannosyltransferase activity and is probably involved in the elongation of the mannan backbone of N-linked glycans on cell wall and periplasmic proteins. This Saccharomyces cerevisiae (strain ATCC 204508 / S288c) (Baker's yeast) protein is Mannan polymerase I complex VAN1 subunit (VAN1).